We begin with the raw amino-acid sequence, 1146 residues long: DNA polymerase II large subunit (1146 aa).

The protein belongs to the archaeal DNA polymerase II family. In terms of assembly, heterodimer of a large subunit and a small subunit.

The catalysed reaction is DNA(n) + a 2'-deoxyribonucleoside 5'-triphosphate = DNA(n+1) + diphosphate. It catalyses the reaction Exonucleolytic cleavage in the 3'- to 5'-direction to yield nucleoside 5'-phosphates.. Its function is as follows. Possesses two activities: a DNA synthesis (polymerase) and an exonucleolytic activity that degrades single-stranded DNA in the 3'- to 5'-direction. Has a template-primer preference which is characteristic of a replicative DNA polymerase. The chain is DNA polymerase II large subunit from Methanosarcina barkeri (strain Fusaro / DSM 804).